The chain runs to 340 residues: UPF0324 membrane protein BA_5405/GBAA_5405/BAS5024 (340 aa).

10 helical membrane-spanning segments follow: residues 13–35 (FGFS…LAEL), 40–59 (IMGQ…AAIG), 99–118 (VLVI…YGLT), 128–150 (GILT…APQV), 157–179 (TAVG…TLLY), 189–211 (YGVF…APGG), 218–240 (AVIV…GVWF), 255–277 (LPIP…GIIP), 279–301 (VVAG…GLGL), and 316–338 (FVAG…YALG).

Belongs to the UPF0324 family.

It is found in the cell membrane. The sequence is that of UPF0324 membrane protein BA_5405/GBAA_5405/BAS5024 from Bacillus anthracis.